A 253-amino-acid polypeptide reads, in one-letter code: 5'-nucleotidase SurE (253 aa).

A divalent metal cation contacts are provided by Asp-8, Asp-9, Ser-40, and Asn-93.

This sequence belongs to the SurE nucleotidase family. The cofactor is a divalent metal cation.

It localises to the cytoplasm. It catalyses the reaction a ribonucleoside 5'-phosphate + H2O = a ribonucleoside + phosphate. In terms of biological role, nucleotidase that shows phosphatase activity on nucleoside 5'-monophosphates. This is 5'-nucleotidase SurE from Methylobacterium sp. (strain 4-46).